The primary structure comprises 192 residues: Elongation factor P (192 aa).

The protein belongs to the elongation factor P family.

The protein resides in the cytoplasm. It functions in the pathway protein biosynthesis; polypeptide chain elongation. Its function is as follows. Involved in peptide bond synthesis. Stimulates efficient translation and peptide-bond synthesis on native or reconstituted 70S ribosomes in vitro. Probably functions indirectly by altering the affinity of the ribosome for aminoacyl-tRNA, thus increasing their reactivity as acceptors for peptidyl transferase. This chain is Elongation factor P, found in Borrelia hermsii (strain HS1 / DAH).